Reading from the N-terminus, the 281-residue chain is uncharacterized protein (281 aa).

Residues 242–281 (IDKQSRKKNIIREINDIKSKINDLSNYMDNLISELDDLFD) are a coiled coil.

This is an uncharacterized protein from Acanthamoeba polyphaga (Amoeba).